We begin with the raw amino-acid sequence, 129 residues long: UPF0344 protein MW0851 (129 aa).

A run of 4 helical transmembrane segments spans residues methionine 1–leucine 21, leucine 36–isoleucine 56, methionine 67–isoleucine 87, and methionine 99–leucine 119.

Belongs to the UPF0344 family.

Its subcellular location is the cell membrane. The polypeptide is UPF0344 protein MW0851 (Staphylococcus aureus (strain MW2)).